The primary structure comprises 38 residues: Large ribosomal subunit protein bL36 (38 aa).

It belongs to the bacterial ribosomal protein bL36 family.

This chain is Large ribosomal subunit protein bL36, found in Fervidobacterium nodosum (strain ATCC 35602 / DSM 5306 / Rt17-B1).